The sequence spans 254 residues: Protein odd-skipped-related 2 (254 aa).

C2H2-type zinc fingers lie at residues 124 to 146 (FICK…ERTH), 152 to 174 (YSCD…KYIH), and 180 to 202 (FKCE…RATH).

Belongs to the Odd C2H2-type zinc-finger protein family.

The protein localises to the nucleus. Its function is as follows. May function as transcription regulator. Required for morphogenesis and function of the digestive tract. In Caenorhabditis elegans, this protein is Protein odd-skipped-related 2.